Consider the following 146-residue polypeptide: Protein US8.5 (146 aa).

The segment at 63–93 (LIAIADARGDPPETLPPGAGGAAPACRRPPR) is disordered. The segment covering 84–93 (AAPACRRPPR) has biased composition (low complexity).

It belongs to the HHV-1 US8.5 protein family. In terms of processing, phosphorylated.

The protein resides in the host nucleus. It is found in the host nucleolus. This chain is Protein US8.5, found in Human herpesvirus 2 (strain HG52) (HHV-2).